A 122-amino-acid chain; its full sequence is UPF0102 protein xcc-b100_3645 (122 aa).

The protein belongs to the UPF0102 family.

This Xanthomonas campestris pv. campestris (strain B100) protein is UPF0102 protein xcc-b100_3645.